Consider the following 285-residue polypeptide: Pantothenate synthetase (285 aa).

Residue 33–40 (MGALHEGH) participates in ATP binding. His-40 (proton donor) is an active-site residue. Gln-64 contacts (R)-pantoate. Gln-64 is a binding site for beta-alanine. 150-153 (GEKD) lines the ATP pocket. Position 156 (Gln-156) interacts with (R)-pantoate. Residues Ala-179 and 187 to 190 (LSSR) contribute to the ATP site.

The protein belongs to the pantothenate synthetase family. Homodimer.

The protein resides in the cytoplasm. The enzyme catalyses (R)-pantoate + beta-alanine + ATP = (R)-pantothenate + AMP + diphosphate + H(+). It participates in cofactor biosynthesis; (R)-pantothenate biosynthesis; (R)-pantothenate from (R)-pantoate and beta-alanine: step 1/1. Catalyzes the condensation of pantoate with beta-alanine in an ATP-dependent reaction via a pantoyl-adenylate intermediate. This chain is Pantothenate synthetase, found in Caulobacter vibrioides (strain ATCC 19089 / CIP 103742 / CB 15) (Caulobacter crescentus).